We begin with the raw amino-acid sequence, 755 residues long: Photosystem I P700 chlorophyll a apoprotein A1 (755 aa).

The next 8 membrane-spanning stretches (helical) occupy residues 72 to 95 (IFSA…YHGA), 158 to 181 (LLCT…FHYH), 197 to 221 (LNHH…HVAI), 297 to 315 (QAHH…GHMY), 352 to 375 (WHAQ…QHMY), 391 to 417 (ISLF…IYMV), 439 to 461 (AIIS…FYVH), and 536 to 554 (FMVH…LILL). 2 residues coordinate [4Fe-4S] cluster: Cys578 and Cys587. Helical transmembrane passes span 594–615 (HVFL…HFSW) and 669–691 (LSAY…MFLF). His680 contacts chlorophyll a'. Chlorophyll a contacts are provided by Met688 and Tyr696. Trp697 is a binding site for phylloquinone. The helical transmembrane segment at 729-749 (AVGVAHYLLGGIVTTWAFFLA) threads the bilayer.

This sequence belongs to the PsaA/PsaB family. The PsaA/B heterodimer binds the P700 chlorophyll special pair and subsequent electron acceptors. PSI consists of a core antenna complex that captures photons, and an electron transfer chain that converts photonic excitation into a charge separation. The cyanobacterial PSI reaction center is composed of one copy each of PsaA,B,C,D,E,F,I,J,K,L,M and X, and forms trimeric complexes. PSI electron transfer chain: 5 chlorophyll a, 1 chlorophyll a', 2 phylloquinones and 3 4Fe-4S clusters. PSI core antenna: 90 chlorophyll a, 22 carotenoids, 3 phospholipids and 1 galactolipid. P700 is a chlorophyll a/chlorophyll a' dimer, A0 is one or more chlorophyll a, A1 is one or both phylloquinones and FX is a shared 4Fe-4S iron-sulfur center. is required as a cofactor.

It localises to the cellular thylakoid membrane. The enzyme catalyses reduced [plastocyanin] + hnu + oxidized [2Fe-2S]-[ferredoxin] = oxidized [plastocyanin] + reduced [2Fe-2S]-[ferredoxin]. In terms of biological role, psaA and PsaB bind P700, the primary electron donor of photosystem I (PSI), as well as the electron acceptors A0, A1 and FX. PSI is a plastocyanin/cytochrome c6-ferredoxin oxidoreductase, converting photonic excitation into a charge separation, which transfers an electron from the donor P700 chlorophyll pair to the spectroscopically characterized acceptors A0, A1, FX, FA and FB in turn. Oxidized P700 is reduced on the lumenal side of the thylakoid membrane by plastocyanin or cytochrome c6. The polypeptide is Photosystem I P700 chlorophyll a apoprotein A1 (Synechococcus sp. (strain JA-3-3Ab) (Cyanobacteria bacterium Yellowstone A-Prime)).